Consider the following 445-residue polypeptide: MRRRRKMEAGAAARAWSLLWLLLPLLGPVCASGPRTLVLLDNLNLRETHSLFFRSLKDRAFELTFKTADDPSLSLIKYGEFLYDNLIIFSPSVEDFGGNINVETISTFIDGGGSVLVAASSDIGDPLRELGSECGIEFDEEKTAVIDHHNYDVSDLGQHTLIVADPENLLKAPTIVGRSSLNPILFRGVGMVADPDNPLVLDILTGSSTSYSFFPDKPITQYPHAVGKNTLLIAGLQARNNARVVFSGSLDFFSDAFFNSAVQKAAPGSQRYSQTGNYELAVALSRWVFKEEGVLRVGPVSHHRVGETAPPNAYTVTDLVEYSIVIEQLSNGRWVPFDGDDIQLEFVRIDPFVRTFLKKKGGKYSVQFKLPDVYGVFQFKVDYNRLGYTHLHSSTQVSVRPLQHTQYERFIPSAYPYYASAFSMMLGLFIFSTVFLHMKEKEKSD.

A signal peptide spans 1 to 32; sequence MRRRRKMEAGAAARAWSLLWLLLPLLGPVCAS. The Lumenal portion of the chain corresponds to 33–415; that stretch reads GPRTLVLLDN…QYERFIPSAY (383 aa). A helical transmembrane segment spans residues 416 to 436; sequence PYYASAFSMMLGLFIFSTVFL. Residues 437 to 445 are Cytoplasmic-facing; sequence HMKEKEKSD.

The protein belongs to the DDOST 48 kDa subunit family. As to quaternary structure, component of the oligosaccharyltransferase (OST) complex. OST exists in two different complex forms which contain common core subunits RPN1, RPN2, OST48, OST4, DAD1 and TMEM258, either STT3A or STT3B as catalytic subunits, and form-specific accessory subunits. STT3A complex assembly occurs through the formation of 3 subcomplexes. Subcomplex 1 contains RPN1 and TMEM258, subcomplex 2 contains the STT3A-specific subunits STT3A, DC2/OSTC, and KCP2 as well as the core subunit OST4, and subcomplex 3 contains RPN2, DAD1, and OST48. The STT3A complex can form stable complexes with the Sec61 complex or with both the Sec61 and TRAP complexes. Interacts with SMIM22.

The protein localises to the endoplasmic reticulum. It is found in the endoplasmic reticulum membrane. The protein operates within protein modification; protein glycosylation. Functionally, subunit of the oligosaccharyl transferase (OST) complex that catalyzes the initial transfer of a defined glycan (Glc(3)Man(9)GlcNAc(2) in eukaryotes) from the lipid carrier dolichol-pyrophosphate to an asparagine residue within an Asn-X-Ser/Thr consensus motif in nascent polypeptide chains, the first step in protein N-glycosylation. N-glycosylation occurs cotranslationally and the complex associates with the Sec61 complex at the channel-forming translocon complex that mediates protein translocation across the endoplasmic reticulum (ER). All subunits are required for a maximal enzyme activity. Required for the assembly of both SST3A- and SS3B-containing OST complexes. This chain is Dolichyl-diphosphooligosaccharide--protein glycosyltransferase 48 kDa subunit, found in Canis lupus familiaris (Dog).